We begin with the raw amino-acid sequence, 444 residues long: Probable glycine dehydrogenase (decarboxylating) subunit 1 (444 aa).

The protein belongs to the GcvP family. N-terminal subunit subfamily. As to quaternary structure, the glycine cleavage system is composed of four proteins: P, T, L and H. In this organism, the P 'protein' is a heterodimer of two subunits.

It catalyses the reaction N(6)-[(R)-lipoyl]-L-lysyl-[glycine-cleavage complex H protein] + glycine + H(+) = N(6)-[(R)-S(8)-aminomethyldihydrolipoyl]-L-lysyl-[glycine-cleavage complex H protein] + CO2. In terms of biological role, the glycine cleavage system catalyzes the degradation of glycine. The P protein binds the alpha-amino group of glycine through its pyridoxal phosphate cofactor; CO(2) is released and the remaining methylamine moiety is then transferred to the lipoamide cofactor of the H protein. This chain is Probable glycine dehydrogenase (decarboxylating) subunit 1, found in Chlorobaculum tepidum (strain ATCC 49652 / DSM 12025 / NBRC 103806 / TLS) (Chlorobium tepidum).